The primary structure comprises 345 residues: Dihydroorotase (345 aa).

2 residues coordinate Zn(2+): His-13 and His-15. Substrate is bound by residues 15–17 and Asn-41; that span reads HLR. Zn(2+) is bound by residues Lys-99, His-136, and His-174. Lys-99 bears the N6-carboxylysine mark. A substrate-binding site is contributed by His-136. Leu-219 is a binding site for substrate. Asp-247 serves as a coordination point for Zn(2+). The active site involves Asp-247. His-251 and Ala-263 together coordinate substrate.

The protein belongs to the metallo-dependent hydrolases superfamily. DHOase family. Class II DHOase subfamily. As to quaternary structure, homodimer. It depends on Zn(2+) as a cofactor.

It carries out the reaction (S)-dihydroorotate + H2O = N-carbamoyl-L-aspartate + H(+). Its pathway is pyrimidine metabolism; UMP biosynthesis via de novo pathway; (S)-dihydroorotate from bicarbonate: step 3/3. Its function is as follows. Catalyzes the reversible cyclization of carbamoyl aspartate to dihydroorotate. The protein is Dihydroorotase of Hahella chejuensis (strain KCTC 2396).